The chain runs to 406 residues: Tyrosine--tRNA ligase (406 aa).

Residue tyrosine 35 participates in L-tyrosine binding. The short motif at 40–49 (ATSTSLHIGH) is the 'HIGH' region element. L-tyrosine-binding residues include tyrosine 166 and glutamine 170. A 'KMSKS' region motif is present at residues 226 to 230 (KMGKS). Lysine 229 contacts ATP. The region spanning 341 to 405 (ILLVDLMVSS…IGKKKILRII (65 aa)) is the S4 RNA-binding domain.

This sequence belongs to the class-I aminoacyl-tRNA synthetase family. TyrS type 1 subfamily. Homodimer.

It localises to the cytoplasm. The catalysed reaction is tRNA(Tyr) + L-tyrosine + ATP = L-tyrosyl-tRNA(Tyr) + AMP + diphosphate + H(+). In terms of biological role, catalyzes the attachment of tyrosine to tRNA(Tyr) in a two-step reaction: tyrosine is first activated by ATP to form Tyr-AMP and then transferred to the acceptor end of tRNA(Tyr). The sequence is that of Tyrosine--tRNA ligase from Borrelia hermsii (strain HS1 / DAH).